Consider the following 415-residue polypeptide: MGSLGAILKHPEDFYPLLKLKIAARHAEKQIPSEPHWAFCYSMLHKVSRSFGLVIQQLGPQLRDAVCIFYLVLRALDTVEDDTSISTEVKVPILMAFHRHIYDNDWHFSCGTKEYKVLMDEFHHVSNAFLDLGSGYKEAIEDITMRMGAGMAKFICKEVETIDDYDEYCHYVAGLVGLGLSKLFHASGAEDLATDSLSNSMGLFLQKTNIIRDYLEDINEIPKSRMFWPRQIWSKYVDKLEDLKYEENSAKAVQCLNDMVTDALVHAEDCLKYMSDLRGPAIFRFCAIPQIMAIGTLALCFNNTQVFRGVVKMRRGLTAKVIDQTKTMSDVYGAFFDFSCLLKSKVDNNDPNATKTLSRLEAIQKICKNSGALTTKRKSYIIENESGYNSTLIIILFIILAILYAYLSSNLPNSL.

Helical transmembrane passes span 281 to 301 (AIFR…ALCF) and 392 to 412 (LIII…SNLP).

Belongs to the phytoene/squalene synthase family. The cofactor is Mg(2+). Mn(2+) serves as cofactor.

Its subcellular location is the endoplasmic reticulum membrane. The enzyme catalyses 2 (2E,6E)-farnesyl diphosphate + NADH + H(+) = squalene + 2 diphosphate + NAD(+). It carries out the reaction 2 (2E,6E)-farnesyl diphosphate + NADPH + H(+) = squalene + 2 diphosphate + NADP(+). It participates in terpene metabolism; lanosterol biosynthesis; lanosterol from farnesyl diphosphate: step 1/3. Its function is as follows. Component of the triterpene saponins (e.g. ginsenosides or panaxosides) and phytosterols biosynthetic pathways. Catalyzes the biosynthesis of squalene. The protein is Squalene synthase 11 of Panax ginseng (Korean ginseng).